Here is a 535-residue protein sequence, read N- to C-terminus: uncharacterized protein (535 aa).

A helical transmembrane segment spans residues 17–37; the sequence is IVLLCMIGFFCTTFMRIHFAL. N-linked (GlcNAc...) asparagine glycosylation is found at Asn44 and Asn61. Helical transmembrane passes span 107–127, 144–164, 167–187, 199–219, 225–245, and 292–312; these read LIFSGTFWGSLITVLPSMFFI, ILVTVITPFLATHFGYFSVFL, IGMGLGEGFVFPTNNAIIGNW, IFTLGNQIASAAGSPMVAAVC, WPATFYFAGIFATGWSILWFF, and AFLGQLQCHFFVNLFMTLFQI. Asn329 is a glycosylation site (N-linked (GlcNAc...) asparagine). The next 5 membrane-spanning stretches (helical) occupy residues 331-351, 368-388, 395-415, 429-451, and 463-483; these read TFTAIPNIFNMIFKVVWGIGI, VSHGVASFGSSFSLILLAFFV, TGLIFFCLMYSSMGTFVSGFY, MSAISMFVAMIGRLTTPAVMSMF, and IFIGCSLAHIFSGSIFLLFGS.

The protein belongs to the major facilitator superfamily. Sodium/anion cotransporter family.

The protein resides in the membrane. This is an uncharacterized protein from Caenorhabditis elegans.